The sequence spans 618 residues: 1-deoxy-D-xylulose-5-phosphate synthase (618 aa).

Thiamine diphosphate is bound by residues His70 and 111–113 (GHS). Mg(2+) is bound at residue Asp142. Residues 143–144 (GS), Asn171, Tyr278, and Glu360 each bind thiamine diphosphate. Asn171 contributes to the Mg(2+) binding site.

Belongs to the transketolase family. DXPS subfamily. As to quaternary structure, homodimer. It depends on Mg(2+) as a cofactor. Requires thiamine diphosphate as cofactor.

The enzyme catalyses D-glyceraldehyde 3-phosphate + pyruvate + H(+) = 1-deoxy-D-xylulose 5-phosphate + CO2. It functions in the pathway metabolic intermediate biosynthesis; 1-deoxy-D-xylulose 5-phosphate biosynthesis; 1-deoxy-D-xylulose 5-phosphate from D-glyceraldehyde 3-phosphate and pyruvate: step 1/1. Catalyzes the acyloin condensation reaction between C atoms 2 and 3 of pyruvate and glyceraldehyde 3-phosphate to yield 1-deoxy-D-xylulose-5-phosphate (DXP). The sequence is that of 1-deoxy-D-xylulose-5-phosphate synthase from Helicobacter pylori (strain HPAG1).